Consider the following 386-residue polypeptide: Leupaxin (386 aa).

Met-1 carries the N-acetylmethionine modification. The LD motif 1 signature appears at 3–15; that stretch reads ELDALLEELERST. Positions 13 to 41 are disordered; that stretch reads RSTLQDSDEYSNPAPLPLDQHSRKETNLD. Ser-19 is modified (phosphoserine). A Phosphotyrosine modification is found at Tyr-22. Ser-54 is modified (phosphoserine). A Phosphotyrosine modification is found at Tyr-62. Short sequence motifs (LD motif) lie at residues 70–82 and 92–103; these read NVYS…KESP and QLDELMAHLTEM. Phosphotyrosine; by LYN is present on Tyr-72. Ser-81 bears the Phosphoserine mark. LIM zinc-binding domains follow at residues 150-208, 209-267, 268-326, and 327-386; these read GHCA…QLFS, PRCA…AMFS, PKCG…HRRG, and TLCH…LFPL.

This sequence belongs to the paxillin family. In terms of assembly, interacts with PTPN22. Interacts with unphosphorylated ITGA4. Interacts with PTK2B/PYK2, PTPN12, AR and SRF. Interacts (via LD motif 3) with LYN and the interaction is induced upon B-cell antigen receptor (BCR) activation. Interacts (via LD motif 3) with PTK2/FAK. In terms of processing, phosphorylated on tyrosine residues. Phosphorylation on Tyr-72 is important for its inhibitory function. Bombesin stimulates phosphorylation on Tyr-22, Tyr-62 and Tyr-72. As to expression, macrophages, monocytes and osteoclasts (at protein level). Strongly expressed in cells and tissues of hematopoietic origin. Highest expression in lymphoid tissues such as spleen, lymph node, thymus and appendix and in the vascular smooth muscle. Lower levels in bone marrow and fetal liver. Also expressed in peripheral blood lymphocytes and a number of hematopoietic cell lines. Very low levels found in epithelial cell lines. Expressed in prostate cancer (PCa) cells and its expression intensity is directly linked to PCa progression.

It localises to the cytoplasm. It is found in the cell junction. The protein resides in the focal adhesion. Its subcellular location is the nucleus. The protein localises to the perinuclear region. It localises to the cell projection. It is found in the podosome. The protein resides in the cell membrane. In terms of biological role, transcriptional coactivator for androgen receptor (AR) and serum response factor (SRF). Contributes to the regulation of cell adhesion, spreading and cell migration and acts as a negative regulator in integrin-mediated cell adhesion events. Suppresses the integrin-induced tyrosine phosphorylation of paxillin (PXN). May play a critical role as an adapter protein in the formation of the adhesion zone in osteoclasts. Negatively regulates B-cell antigen receptor (BCR) signaling. This chain is Leupaxin (LPXN), found in Homo sapiens (Human).